Here is a 514-residue protein sequence, read N- to C-terminus: Developmental and secondary metabolism regulator veA (514 aa).

The Velvet domain occupies 26–218 (NRHLWYQLTV…ADQGCHVRIR (193 aa)). The Nuclear localization signal motif lies at 40–45 (ERARAC). The interval 219-463 (RDVRMRKRDA…PIGSKRKHDQ (245 aa)) is disordered. A compositionally biased stretch (basic and acidic residues) spans 228 to 243 (AKSNNGRDRREDDMAR). Residues 256 to 267 (SAAARARSMSNS) show a composition bias toward low complexity. Positions 386–396 (SYPSTPVSSHP) are enriched in polar residues. A PEST region spans residues 411–448 (KSPSNSVSPSNSSLKITDLLVQPLPSSEPKLEVGSAPC). Low complexity predominate over residues 412–423 (SPSNSVSPSNSS).

This sequence belongs to the velvet family. VeA subfamily. As to quaternary structure, component of the heterotrimeric velvet complex composed of laeA, veA and velB; VeA acting as a bridging protein between laeA and velB.

It localises to the nucleus. Its subcellular location is the cytoplasm. Functionally, component of the velvet transcription factor complex that controls sexual/asexual developmental ratio in response to light, promoting sexual development in the darkness while stimulating asexual sporulation under illumination. The velvet complex hat acts as a global regulator for secondary metabolite gene expression. Controls the expression of the cephalosporin C gene cluster. Regulates hyphal fragmentation. This Hapsidospora chrysogenum (strain ATCC 11550 / CBS 779.69 / DSM 880 / IAM 14645 / JCM 23072 / IMI 49137) (Acremonium chrysogenum) protein is Developmental and secondary metabolism regulator veA.